Reading from the N-terminus, the 347-residue chain is Sulfate/thiosulfate import ATP-binding protein CysA 1 (347 aa).

An ABC transporter domain is found at 3–237 (VRVESLRKEF…PVSPFVYGFI (235 aa)). Residue 35-42 (GPSGSGKT) participates in ATP binding.

The protein belongs to the ABC transporter superfamily. Sulfate/tungstate importer (TC 3.A.1.6) family. The complex is composed of two ATP-binding proteins (CysA), two transmembrane proteins (CysT and CysW) and a solute-binding protein (CysP).

Its subcellular location is the cell inner membrane. It catalyses the reaction sulfate(out) + ATP + H2O = sulfate(in) + ADP + phosphate + H(+). It carries out the reaction thiosulfate(out) + ATP + H2O = thiosulfate(in) + ADP + phosphate + H(+). Part of the ABC transporter complex CysAWTP involved in sulfate/thiosulfate import. Responsible for energy coupling to the transport system. This is Sulfate/thiosulfate import ATP-binding protein CysA 1 from Rhizobium meliloti (strain 1021) (Ensifer meliloti).